Here is a 427-residue protein sequence, read N- to C-terminus: Adenylosuccinate synthetase (427 aa).

Residues 12–18 and 40–42 contribute to the GTP site; these read GDEGKGK and GHT. The active-site Proton acceptor is Asp13. Mg(2+) contacts are provided by Asp13 and Gly40. Residues 13–16, 38–41, Thr128, Arg142, Gln223, Thr238, and Arg302 contribute to the IMP site; these read DEGK and NAGH. Residue His41 is the Proton donor of the active site. 298 to 304 is a binding site for substrate; sequence VTTGRAR. Residues Arg304, 330 to 332, and 412 to 414 contribute to the GTP site; these read KLD and GVG.

This sequence belongs to the adenylosuccinate synthetase family. In terms of assembly, homodimer. Mg(2+) is required as a cofactor.

It localises to the cytoplasm. It catalyses the reaction IMP + L-aspartate + GTP = N(6)-(1,2-dicarboxyethyl)-AMP + GDP + phosphate + 2 H(+). It participates in purine metabolism; AMP biosynthesis via de novo pathway; AMP from IMP: step 1/2. Plays an important role in the de novo pathway of purine nucleotide biosynthesis. Catalyzes the first committed step in the biosynthesis of AMP from IMP. The chain is Adenylosuccinate synthetase from Frankia alni (strain DSM 45986 / CECT 9034 / ACN14a).